A 471-amino-acid polypeptide reads, in one-letter code: Putative multidrug resistance protein MdtD (471 aa).

The next 13 membrane-spanning stretches (helical) occupy residues 12–32, 49–69, 77–97, 106–126, 138–158, 165–185, 197–217, 225–245, 263–285, 290–312, 342–362, 396–416, and 431–451; these read LWIVAFGFFMQALDTTIVNTA, MVIVSYVLTVAVMLPASGWLA, IFFTAIVLFTLGSLFCAQSST, VLQGIGGAMMVPVGRLTVMKI, FVTLPGQVGPLLGPALGGLLV, WIFLINLPVGIAGAAATLWLM, FSGFLLLAFGMAALTIALDGY, AGLGALVAGGSAATLLYLWHA, FSLGLFGSLCGRIGSGMLPFMTP, IGLGFSPFHAGLMMMPMVLGSMG, LLFMGVALAGWYWLLPVVMLF, MVMQLSMSLGVSIAGLLLGAF, and IFFWTYLCMALIIALPALVFA.

The protein belongs to the major facilitator superfamily. TCR/Tet family.

Its subcellular location is the cell inner membrane. The protein is Putative multidrug resistance protein MdtD of Cronobacter sakazakii (strain ATCC BAA-894) (Enterobacter sakazakii).